The chain runs to 305 residues: Ribosomal protein L11 methyltransferase (305 aa).

Thr149, Gly176, Asp198, and Asn240 together coordinate S-adenosyl-L-methionine.

This sequence belongs to the methyltransferase superfamily. PrmA family.

It localises to the cytoplasm. The catalysed reaction is L-lysyl-[protein] + 3 S-adenosyl-L-methionine = N(6),N(6),N(6)-trimethyl-L-lysyl-[protein] + 3 S-adenosyl-L-homocysteine + 3 H(+). Its function is as follows. Methylates ribosomal protein L11. This Trichlorobacter lovleyi (strain ATCC BAA-1151 / DSM 17278 / SZ) (Geobacter lovleyi) protein is Ribosomal protein L11 methyltransferase.